The chain runs to 1633 residues: Serine-aspartate repeat-containing protein F (1633 aa).

A signal peptide spans methionine 1 to alanine 45. A ligand binding A region region spans residues alanine 46 to proline 678. Residues lysine 51–aspartate 269 are disordered. Positions alanine 61–serine 74 are enriched in basic and acidic residues. Composition is skewed to polar residues over residues glycine 85–threonine 99 and proline 146–asparagine 168. Basic and acidic residues predominate over residues lysine 175–threonine 184. Positions glutamine 186 to glutamine 226 are enriched in polar residues. A compositionally biased stretch (basic and acidic residues) spans leucine 227–threonine 253. Positions lysine 255–serine 266 are enriched in polar residues. CNA-B domains lie at threonine 679–proline 797, lysine 798–proline 907, isoleucine 908–proline 1018, and lysine 1019–aspartate 1129. Residues threonine 679–aspartate 1129 form a type I collagen binding region region. A disordered region spans residues phenylalanine 862–threonine 889. The interval lysine 1085–threonine 1608 is disordered. Over residues glutamate 1107–phenylalanine 1119 the composition is skewed to basic and acidic residues. Residues tyrosine 1125–serine 1584 are compositionally biased toward acidic residues. A compositionally biased stretch (basic and acidic residues) spans aspartate 1585–lysine 1606. An LPXTG sorting signal motif is present at residues leucine 1594–glycine 1598. Threonine 1597 carries the pentaglycyl murein peptidoglycan amidated threonine modification. Residues glycine 1598–lysine 1633 constitute a propeptide, removed by sortase.

This sequence belongs to the serine-aspartate repeat-containing protein (SDr) family.

The protein localises to the secreted. It is found in the cell wall. Binds to type I collagen via alpha-2(I) or alpha-1(I) chains. The protein is Serine-aspartate repeat-containing protein F (sdrF) of Staphylococcus epidermidis (strain ATCC 12228 / FDA PCI 1200).